The primary structure comprises 231 residues: Staphylococcal superantigen-like 7 (231 aa).

The signal sequence occupies residues 1 to 30; it reads MKLKTLAKATLALGLLTTGVITSEGQAVQA.

It belongs to the staphylococcal/streptococcal toxin family. Interacts with host IgA and complement C5; these interactions inhibits complement activation.

It is found in the secreted. Plays a role in the inhibition of host complement-mediated lysis and serum bactericidal activity by interacting with complement component C5. Affects all three pathways of complement activation and inhibits the cleavage of C5 by preventing its binding to C5 convertases. In turn, prevents C5a-mediated neutrophil migration. The polypeptide is Staphylococcal superantigen-like 7 (Staphylococcus aureus (strain NCTC 8325 / PS 47)).